Here is a 67-residue protein sequence, read N- to C-terminus: Sec-independent protein translocase protein TatA (67 aa).

Residues 1 to 21 form a helical membrane-spanning segment; sequence MGSFSLTHWIIVLIIVVLIFG. A disordered region spans residues 43 to 67; that stretch reads LNEGTDGKEAQKDDVIEHKKDEDKA. Over residues 47–67 the composition is skewed to basic and acidic residues; the sequence is TDGKEAQKDDVIEHKKDEDKA.

It belongs to the TatA/E family. The Tat system comprises two distinct complexes: a TatABC complex, containing multiple copies of TatA, TatB and TatC subunits, and a separate TatA complex, containing only TatA subunits. Substrates initially bind to the TatABC complex, which probably triggers association of the separate TatA complex to form the active translocon.

Its subcellular location is the cell inner membrane. Functionally, part of the twin-arginine translocation (Tat) system that transports large folded proteins containing a characteristic twin-arginine motif in their signal peptide across membranes. TatA could form the protein-conducting channel of the Tat system. The polypeptide is Sec-independent protein translocase protein TatA (Neisseria gonorrhoeae (strain ATCC 700825 / FA 1090)).